Consider the following 364-residue polypeptide: Chorismate synthase (364 aa).

Arg48 provides a ligand contact to NADP(+). FMN-binding positions include 131-133 (RSS), 243-244 (NA), Gly288, 303-307 (KPTSS), and Arg329.

The protein belongs to the chorismate synthase family. Homotetramer. FMNH2 is required as a cofactor.

It catalyses the reaction 5-O-(1-carboxyvinyl)-3-phosphoshikimate = chorismate + phosphate. It functions in the pathway metabolic intermediate biosynthesis; chorismate biosynthesis; chorismate from D-erythrose 4-phosphate and phosphoenolpyruvate: step 7/7. Its function is as follows. Catalyzes the anti-1,4-elimination of the C-3 phosphate and the C-6 proR hydrogen from 5-enolpyruvylshikimate-3-phosphate (EPSP) to yield chorismate, which is the branch point compound that serves as the starting substrate for the three terminal pathways of aromatic amino acid biosynthesis. This reaction introduces a second double bond into the aromatic ring system. This Brucella anthropi (strain ATCC 49188 / DSM 6882 / CCUG 24695 / JCM 21032 / LMG 3331 / NBRC 15819 / NCTC 12168 / Alc 37) (Ochrobactrum anthropi) protein is Chorismate synthase.